The chain runs to 469 residues: MSHQQPLSSSVQPTDIYGGDEVSALVLDPGYCNTRAGYAGEEMPKQVLPSFYGHINGRDVFGDEYIVPKPGFEVRNYMNRDSVVEDWDAATRMWEHVLVKRLQPERSTPPSKKGINISDDGDVPMEDDGNNNEDATDALEKPLAENPLLMTEAPWNSPKAREKAIEISMETWGVPAFWLSKTPVLAAFAAGKATALVIDVGGANTSVTAIHDGMVLKRSIQRSPVGGVWLSSQICKMWDGSEPKVDVVPRFMVESKKPVEAGAPAEANLRKFNFDIHPSFRAYEEERVLTEFKESVVEVWRGPQRFTTPGNEDAVRTQPGRVFEMPDGSNQMWREQRFKVSEGMWDETAAYNSTDEEGRVTKAQTIPALIKAALEGVDVDLRPNILGNVVVTGSTSLLNGFNDRLNHELAQMYPGVKIKIHAAGLTTERRFGAWIGGSILASLGTFHQMWISRKEYDENGAGIVEKRCK.

The disordered stretch occupies residues 104-136 (PERSTPPSKKGINISDDGDVPMEDDGNNNEDAT). A compositionally biased stretch (acidic residues) spans 119-136 (DDGDVPMEDDGNNNEDAT).

The protein belongs to the actin family. ARP4 subfamily. Component of the NuA4 histone acetyltransferase complex, of the INO80 chromatin remodeling complex, and of the SWR1 chromatin remodeling complex.

It is found in the nucleus. In terms of biological role, chromatin interaction component of the NuA4 histone acetyltransferase complex which is involved in transcriptional activation of selected genes principally by acetylation of nucleosomal histone H4 and H2A. The NuA4 complex is also involved in DNA repair. Is required for NuA4 complex integrity. Component of the SWR1 complex which mediates the ATP-dependent exchange of histone H2A for the H2A variant H2A.Z leading to transcriptional regulation of selected genes by chromatin remodeling. Component of the INO80 complex which remodels chromatin by shifting nucleosomes and is involved in DNA repair. The chain is Actin-related protein 4 (arp-4) from Neurospora crassa (strain ATCC 24698 / 74-OR23-1A / CBS 708.71 / DSM 1257 / FGSC 987).